Here is a 186-residue protein sequence, read N- to C-terminus: Ribosome-recycling factor (186 aa).

This sequence belongs to the RRF family.

It is found in the cytoplasm. Functionally, responsible for the release of ribosomes from messenger RNA at the termination of protein biosynthesis. May increase the efficiency of translation by recycling ribosomes from one round of translation to another. The sequence is that of Ribosome-recycling factor from Wolinella succinogenes (strain ATCC 29543 / DSM 1740 / CCUG 13145 / JCM 31913 / LMG 7466 / NCTC 11488 / FDC 602W) (Vibrio succinogenes).